Here is a 398-residue protein sequence, read N- to C-terminus: Tryptophan synthase beta chain (398 aa).

The residue at position 88 (Lys88) is an N6-(pyridoxal phosphate)lysine.

The protein belongs to the TrpB family. As to quaternary structure, tetramer of two alpha and two beta chains. Pyridoxal 5'-phosphate serves as cofactor.

It catalyses the reaction (1S,2R)-1-C-(indol-3-yl)glycerol 3-phosphate + L-serine = D-glyceraldehyde 3-phosphate + L-tryptophan + H2O. Its pathway is amino-acid biosynthesis; L-tryptophan biosynthesis; L-tryptophan from chorismate: step 5/5. Its function is as follows. The beta subunit is responsible for the synthesis of L-tryptophan from indole and L-serine. The chain is Tryptophan synthase beta chain from Actinobacillus succinogenes (strain ATCC 55618 / DSM 22257 / CCUG 43843 / 130Z).